We begin with the raw amino-acid sequence, 524 residues long: Cytochrome P450 4F12 (524 aa).

The next 2 helical transmembrane spans lie at 19–39 (WLLL…AWTY) and 87–107 (GFTV…PDTI). Cys468 contributes to the heme binding site.

The protein belongs to the cytochrome P450 family. It depends on heme as a cofactor. In terms of tissue distribution, expressed in small intestine, liver, colon and heart.

The protein resides in the endoplasmic reticulum membrane. The protein localises to the microsome membrane. It catalyses the reaction an organic molecule + reduced [NADPH--hemoprotein reductase] + O2 = an alcohol + oxidized [NADPH--hemoprotein reductase] + H2O + H(+). It carries out the reaction (5Z,8Z,11Z,14Z)-eicosatetraenoate + reduced [NADPH--hemoprotein reductase] + O2 = 18-hydroxy-(5Z,8Z,11Z,14Z)-eicosatetraenoate + oxidized [NADPH--hemoprotein reductase] + H2O + H(+). The catalysed reaction is (7Z,10Z,13Z,16Z,19Z)-docosapentaenoate + reduced [NADPH--hemoprotein reductase] + O2 = 10,11-epoxy-(7Z,13Z,16Z,19Z)-docosatetraenoate + oxidized [NADPH--hemoprotein reductase] + H2O + H(+). The enzyme catalyses (7Z,10Z,13Z,16Z,19Z)-docosapentaenoate + reduced [NADPH--hemoprotein reductase] + O2 = 13,14-epoxy-(7Z,10Z,16Z,19Z)-docosatetraenoate + oxidized [NADPH--hemoprotein reductase] + H2O + H(+). It catalyses the reaction (7Z,10Z,13Z,16Z,19Z)-docosapentaenoate + reduced [NADPH--hemoprotein reductase] + O2 = 16,17-epoxy-(7Z,10Z,13Z,19Z)-docosatetraenoate + oxidized [NADPH--hemoprotein reductase] + H2O + H(+). It carries out the reaction (7Z,10Z,13Z,16Z,19Z)-docosapentaenoate + reduced [NADPH--hemoprotein reductase] + O2 = 19,20-epoxy-(7Z,10Z,13Z,16Z)-docosatetraenoate + oxidized [NADPH--hemoprotein reductase] + H2O + H(+). The catalysed reaction is (4Z,7Z,10Z,13Z,16Z,19Z)-docosahexaenoate + reduced [NADPH--hemoprotein reductase] + O2 = 10,11-epoxy-(4Z,7Z,13Z,16Z,19Z)-docosapentaenoate + oxidized [NADPH--hemoprotein reductase] + H2O + H(+). The enzyme catalyses (4Z,7Z,10Z,13Z,16Z,19Z)-docosahexaenoate + reduced [NADPH--hemoprotein reductase] + O2 = 13,14-epoxy-(4Z,7Z,10Z,16Z,19Z)-docosapentaenoate + oxidized [NADPH--hemoprotein reductase] + H2O + H(+). It catalyses the reaction (4Z,7Z,10Z,13Z,16Z,19Z)-docosahexaenoate + reduced [NADPH--hemoprotein reductase] + O2 = 16,17-epoxy-(4Z,7Z,10Z,13Z,19Z)-docosapentaenoate + oxidized [NADPH--hemoprotein reductase] + H2O + H(+). It carries out the reaction (4Z,7Z,10Z,13Z,16Z,19Z)-docosahexaenoate + reduced [NADPH--hemoprotein reductase] + O2 = 19,20-epoxy-(4Z,7Z,10Z,13Z,16Z)-docosapentaenoate + oxidized [NADPH--hemoprotein reductase] + H2O + H(+). The protein operates within lipid metabolism; arachidonate metabolism. A cytochrome P450 monooxygenase involved in the metabolism of endogenous polyunsaturated fatty acids (PUFAs). Mechanistically, uses molecular oxygen inserting one oxygen atom into a substrate, and reducing the second into a water molecule, with two electrons provided by NADPH via cytochrome P450 reductase (CPR; NADPH-ferrihemoprotein reductase). Catalyzes the hydroxylation of carbon hydrogen bonds, with preference for omega-2 position. Metabolizes (5Z,8Z,11Z,14Z)-eicosatetraenoic acid (arachidonate) toward 18-hydroxy arachidonate. Catalyzes the epoxidation of double bonds of PUFAs such as docosapentaenoic and docosahexaenoic acids. Has low omega-hydroxylase activity toward leukotriene B4 and arachidonate. Involved in the metabolism of xenobiotics. Catalyzes the hydroxylation of the antihistamine drug ebastine. In Homo sapiens (Human), this protein is Cytochrome P450 4F12.